The primary structure comprises 282 residues: ATP synthase gamma chain (282 aa).

Belongs to the ATPase gamma chain family. F-type ATPases have 2 components, CF(1) - the catalytic core - and CF(0) - the membrane proton channel. CF(1) has five subunits: alpha(3), beta(3), gamma(1), delta(1), epsilon(1). CF(0) has three main subunits: a, b and c.

The protein localises to the cell membrane. Produces ATP from ADP in the presence of a proton gradient across the membrane. The gamma chain is believed to be important in regulating ATPase activity and the flow of protons through the CF(0) complex. This chain is ATP synthase gamma chain, found in Clostridium botulinum (strain Langeland / NCTC 10281 / Type F).